The primary structure comprises 403 residues: MQRERSMKRKRRRRGIKDMCNRHDCEIPPDLMIEILIRLPTKSFMRFKCVSKQWSPLISGRYFCNRLFTCVTRQQQQQPRLYMCLVAKDKQCVLLSSTSPDNTCFVLVDQDLSIPGYFFASVPGLLCFQFGTKACIYNPSTKQLLTLPSVKSDITAQQGQLKTTQYYIGRDPVNDQYKLVCTILIYSKLFANMSSEHWVFTLELGGSWKKVVPLGNYHPHAPATAGRSIDGVVHYLAWVDLYKCAVVSFNIRSEEVTTFLLPRKIWDVPVPALMMKADLIEYDGKLAIFSHSYLKDEGLVELWVLKDAAGKKKWSNMILVLQPCQRHLVHGIDLIVKGTTQDGKVILSPLEMRSQFYILCYDVQNNDLRKVEITGVPRLWLHKECNFDLKFMDESESFIYLEI.

The F-box domain maps to 21–71; sequence NRHDCEIPPDLMIEILIRLPTKSFMRFKCVSKQWSPLISGRYFCNRLFTCV.

This chain is F-box protein At2g40925, found in Arabidopsis thaliana (Mouse-ear cress).